The following is a 628-amino-acid chain: Nuclear RNA export factor 1 (628 aa).

Residues 47–83 (DTQSRYEDDDEPAVPVRASLTSASSRGRGGSSRGFGQ) are disordered. Positions 63 to 72 (RASLTSASSR) are enriched in low complexity. The region spanning 100–179 (YKCRATGAAK…EFYTSKVPAP (80 aa)) is the RRM domain. LRR repeat units lie at residues 245-270 (NIVA…SIAK) and 271-294 (FVME…FAGL). The region spanning 365–526 (LVEQFVTSYF…VAVISDQLFI (162 aa)) is the NTF2 domain. Residues 576 to 628 (PIREEMIKAMCQFSGMIPPFSEKCLADCAWNFDFACQKFNEIKSSVPAEAFAH) enclose the TAP-C domain.

The protein belongs to the NXF family. Interacts with nucleoporins, Nup98, Nup153 and Nup214.

The protein localises to the nucleus. Involved in RNA export from the nucleus to the cytoplasm. This is Nuclear RNA export factor 1 (nxf-1) from Caenorhabditis elegans.